The chain runs to 326 residues: Acetyl-coenzyme A carboxylase carboxyl transferase subunit alpha (326 aa).

In terms of domain architecture, CoA carboxyltransferase C-terminal spans 45-298 (LEARAMQLRE…KQVLLENLDE (254 aa)).

This sequence belongs to the AccA family. As to quaternary structure, acetyl-CoA carboxylase is a heterohexamer composed of biotin carboxyl carrier protein (AccB), biotin carboxylase (AccC) and two subunits each of ACCase subunit alpha (AccA) and ACCase subunit beta (AccD).

It localises to the cytoplasm. The enzyme catalyses N(6)-carboxybiotinyl-L-lysyl-[protein] + acetyl-CoA = N(6)-biotinyl-L-lysyl-[protein] + malonyl-CoA. Its pathway is lipid metabolism; malonyl-CoA biosynthesis; malonyl-CoA from acetyl-CoA: step 1/1. In terms of biological role, component of the acetyl coenzyme A carboxylase (ACC) complex. First, biotin carboxylase catalyzes the carboxylation of biotin on its carrier protein (BCCP) and then the CO(2) group is transferred by the carboxyltransferase to acetyl-CoA to form malonyl-CoA. The chain is Acetyl-coenzyme A carboxylase carboxyl transferase subunit alpha from Nostoc punctiforme (strain ATCC 29133 / PCC 73102).